Consider the following 504-residue polypeptide: Putative arrestin-related trafficking adapter SPBC839.02 (504 aa).

A disordered region spans residues 481–504 (QAPPPKYDDIFQSGSSHDENHDDN).

Belongs to the ALY1 family.

Functionally, may regulate endocytosis in response to extracellular stimuli. The chain is Putative arrestin-related trafficking adapter SPBC839.02 from Schizosaccharomyces pombe (strain 972 / ATCC 24843) (Fission yeast).